The chain runs to 243 residues: MGQKINPIGFRLGINRTWDSRWFADNAEYGQLLHEDLKMRKFVMSELKQAGISKVVIERPHKKCRVTIHSARPGLIIGRKGADIDKLRKKLSDMTNSETHLNIVEVRKPEVDATLVAQSIAQQLERRVAFRRAMKRAVQSAMRLGAEGIKITCAGRLGGAEIARTEWYREGRVPLHTLRADIDYGTAEAETAFGICGIKVWIFKGEILEHDPMASERRAMEGDAQGPASRDRDRDRDRRRDNA.

Residues 39–107 (MRKFVMSELK…ETHLNIVEVR (69 aa)) form the KH type-2 domain. The interval 214 to 243 (ASERRAMEGDAQGPASRDRDRDRDRRRDNA) is disordered. Residues 229-243 (SRDRDRDRDRRRDNA) are compositionally biased toward basic and acidic residues.

Belongs to the universal ribosomal protein uS3 family. As to quaternary structure, part of the 30S ribosomal subunit. Forms a tight complex with proteins S10 and S14.

Binds the lower part of the 30S subunit head. Binds mRNA in the 70S ribosome, positioning it for translation. The protein is Small ribosomal subunit protein uS3 of Rhizobium leguminosarum bv. trifolii (strain WSM2304).